Reading from the N-terminus, the 417-residue chain is 1-deoxy-D-xylulose 5-phosphate reductoisomerase (417 aa).

The NADPH site is built by threonine 10, glycine 11, serine 12, isoleucine 13, glycine 36, arginine 37, asparagine 38, and asparagine 130. Lysine 131 lines the 1-deoxy-D-xylulose 5-phosphate pocket. Glutamate 132 lines the NADPH pocket. Aspartate 156 serves as a coordination point for Mn(2+). 1-deoxy-D-xylulose 5-phosphate-binding residues include serine 157, glutamate 158, serine 194, and histidine 217. Glutamate 158 is a binding site for Mn(2+). Glycine 223 is a binding site for NADPH. 1-deoxy-D-xylulose 5-phosphate-binding residues include serine 230, asparagine 235, lysine 236, and glutamate 239. Glutamate 239 serves as a coordination point for Mn(2+).

It belongs to the DXR family. It depends on Mg(2+) as a cofactor. The cofactor is Mn(2+).

The enzyme catalyses 2-C-methyl-D-erythritol 4-phosphate + NADP(+) = 1-deoxy-D-xylulose 5-phosphate + NADPH + H(+). It functions in the pathway isoprenoid biosynthesis; isopentenyl diphosphate biosynthesis via DXP pathway; isopentenyl diphosphate from 1-deoxy-D-xylulose 5-phosphate: step 1/6. Its function is as follows. Catalyzes the NADPH-dependent rearrangement and reduction of 1-deoxy-D-xylulose-5-phosphate (DXP) to 2-C-methyl-D-erythritol 4-phosphate (MEP). This Synechococcus sp. (strain CC9902) protein is 1-deoxy-D-xylulose 5-phosphate reductoisomerase.